Here is a 164-residue protein sequence, read N- to C-terminus: Phosphopantetheine adenylyltransferase (164 aa).

Residue Ser9 coordinates substrate. ATP-binding positions include 9 to 10 (SF) and His17. Residues Lys41, Leu73, and Lys87 each coordinate substrate. ATP-binding positions include 88-90 (GLR), Glu98, and 123-129 (YSYISSS).

Belongs to the bacterial CoaD family. Homohexamer. It depends on Mg(2+) as a cofactor.

Its subcellular location is the cytoplasm. It catalyses the reaction (R)-4'-phosphopantetheine + ATP + H(+) = 3'-dephospho-CoA + diphosphate. It participates in cofactor biosynthesis; coenzyme A biosynthesis; CoA from (R)-pantothenate: step 4/5. In terms of biological role, reversibly transfers an adenylyl group from ATP to 4'-phosphopantetheine, yielding dephospho-CoA (dPCoA) and pyrophosphate. The polypeptide is Phosphopantetheine adenylyltransferase (Clostridium perfringens (strain ATCC 13124 / DSM 756 / JCM 1290 / NCIMB 6125 / NCTC 8237 / Type A)).